The following is a 636-amino-acid chain: Chaperone protein HtpG (636 aa).

Residues 1-342 (MSSETLEFQA…AHDLSLNISR (342 aa)) are a; substrate-binding. Positions 343–558 (ELLQQDRQIQ…AHDVTPTLEK (216 aa)) are b. Residues 559–636 (MYRAMGHEVP…ILAERLARTL (78 aa)) are c.

This sequence belongs to the heat shock protein 90 family. In terms of assembly, homodimer.

The protein resides in the cytoplasm. Its function is as follows. Molecular chaperone. Has ATPase activity. The sequence is that of Chaperone protein HtpG from Salinispora tropica (strain ATCC BAA-916 / DSM 44818 / JCM 13857 / NBRC 105044 / CNB-440).